The chain runs to 492 residues: N-succinylglutamate 5-semialdehyde dehydrogenase (492 aa).

220–225 (GSASTG) is an NAD(+) binding site. Active-site residues include Glu-243 and Cys-277.

The protein belongs to the aldehyde dehydrogenase family. AstD subfamily.

The catalysed reaction is N-succinyl-L-glutamate 5-semialdehyde + NAD(+) + H2O = N-succinyl-L-glutamate + NADH + 2 H(+). It functions in the pathway amino-acid degradation; L-arginine degradation via AST pathway; L-glutamate and succinate from L-arginine: step 4/5. Its function is as follows. Catalyzes the NAD-dependent reduction of succinylglutamate semialdehyde into succinylglutamate. This Salmonella enteritidis PT4 (strain P125109) protein is N-succinylglutamate 5-semialdehyde dehydrogenase.